Here is a 628-residue protein sequence, read N- to C-terminus: DNA primase (628 aa).

The CHC2-type zinc finger occupies 40–64; that stretch reads CPFHEERSPSFSVAEDKQIFHCFGC. Residues 269–351 form the Toprim domain; that stretch reads NTVLLFEGFM…DLSIVSIPEK (83 aa). The Mg(2+) site is built by E275, D319, and D321.

This sequence belongs to the DnaG primase family. Monomer. Interacts with DnaB. Requires Zn(2+) as cofactor. Mg(2+) is required as a cofactor.

The catalysed reaction is ssDNA + n NTP = ssDNA/pppN(pN)n-1 hybrid + (n-1) diphosphate.. Its function is as follows. RNA polymerase that catalyzes the synthesis of short RNA molecules used as primers for DNA polymerase during DNA replication. The protein is DNA primase of Enterococcus faecalis (strain ATCC 700802 / V583).